The primary structure comprises 259 residues: MRVLVSNDDGVDAPGIQILAEALRRAGHEVMVVAPDRDRSGASNSLTLDVPIRTRRIDAQTCAVAGTPTDCVHLALTGMLDYDPDIVVSGINNSANLGDDVIYSGTVSAAMEGRFLGLPAVAVSLVTQNHEAHHFETAARAAVEIVARLKADPLPADTILNVNVPDLAWADVLGFEVTRLGNRHRSEPCVPQSDPRGRTVYWIGPAGPEQDAGAGTDFHAVRTGHISITPIHVDLTRYQALDTVAGWVGGLTAALDAPA.

Positions 8, 9, 40, and 92 each coordinate a divalent metal cation.

Belongs to the SurE nucleotidase family. A divalent metal cation is required as a cofactor.

The protein resides in the cytoplasm. The catalysed reaction is a ribonucleoside 5'-phosphate + H2O = a ribonucleoside + phosphate. Functionally, nucleotidase that shows phosphatase activity on nucleoside 5'-monophosphates. In Xanthomonas campestris pv. campestris (strain B100), this protein is 5'-nucleotidase SurE.